The sequence spans 458 residues: Protein amnionless (458 aa).

A signal peptide spans 1-19 (MGALGRALLWLQLCALARA). The Extracellular segment spans residues 20-366 (AYKLWVPTTD…LGSGSRAGLA (347 aa)). N35 carries an N-linked (GlcNAc...) asparagine glycan. Disulfide bonds link C43-C96, C137-C213, C205-C211, C223-C249, C234-C250, and C239-C253. The tract at residues 67–87 (SDMLLPRDGEFVLASGAGFGA) is interaction with CUBN. Residues 203-254 (GACADPSGCVCGDAEVQPWICAALLQPLGGRCPPAACPDALRPEGQCCDLCG) enclose the VWFC domain. The helical transmembrane segment at 367–387 (GGVAAGLLLLLLALAAGLLLL) threads the bilayer. Over 388–458 (RRAPRLRWTK…VNPLFAEAEA (71 aa)) the chain is Cytoplasmic. Positions 422–446 (SVGPVPRTPQPPPAQQAGSSSTSRS) are disordered.

As to quaternary structure, interacts (via extracellular region) with CUBN/cubilin. This gives rise to a huge complex containing one AMN chain and three CUBN chains. Post-translationally, N-glycosylated. A soluble form arises by proteolytic removal of the membrane anchor. In terms of tissue distribution, detected in kidney (at protein level). Detected in kidney and ileum.

It localises to the apical cell membrane. It is found in the cell membrane. The protein localises to the endosome membrane. Its subcellular location is the membrane. The protein resides in the coated pit. It localises to the secreted. Functionally, membrane-bound component of the endocytic receptor formed by AMN and CUBN. Required for normal CUBN glycosylation and trafficking to the cell surface. The complex formed by AMN and CUBN is required for efficient absorption of vitamin B12. Required for normal CUBN-mediated protein transport in the kidney. This is Protein amnionless (AMN) from Canis lupus familiaris (Dog).